The chain runs to 305 residues: Peroxisome assembly protein 26 (305 aa).

Residues 1–25 (MKSDCSTSAAPFRGLGGPLRSSEPV) are disordered. Residues 1 to 246 (MKSDCSTSAA…RQLWDSAVSH (246 aa)) are Cytoplasmic-facing. The chain crosses the membrane as a helical; Signal-anchor for type II membrane protein span at residues 247–267 (FFSLPFKKSLLAALILCLLVV). Topologically, residues 268–305 (RFDPASPSSLPSLYKLAQLFRWIRKAASSRLYQLRIRD) are peroxisomal matrix.

The protein belongs to the peroxin-26 family. In terms of assembly, interacts (via its cytoplasmic domain) with PEX6; interaction is direct and is ATP-dependent. Interacts with PEX1; interaction is indirect and is mediated via interaction with PEX6.

The protein resides in the peroxisome membrane. Its function is as follows. Peroxisomal docking factor that anchors PEX1 and PEX6 to peroxisome membranes. PEX26 is therefore required for the formation of the PEX1-PEX6 AAA ATPase complex, a complex that mediates the extraction of the PEX5 receptor from peroxisomal membrane. The polypeptide is Peroxisome assembly protein 26 (PEX26) (Macaca fascicularis (Crab-eating macaque)).